Reading from the N-terminus, the 235-residue chain is Chalcone--flavanone isomerase 1 (235 aa).

Substrate is bound by residues Thr50 and Ser192.

Belongs to the chalcone isomerase family.

The enzyme catalyses a chalcone = a flavanone.. It participates in secondary metabolite biosynthesis; flavonoid biosynthesis. Functionally, catalyzes the intramolecular cyclization of bicyclic chalcones into tricyclic (S)-flavanones. Responsible for the isomerization of 4,2',4',6'-tetrahydroxychalcone (also termed chalcone) into naringenin. This is Chalcone--flavanone isomerase 1 (CHI1) from Chrysanthemum morifolium (Florist's daisy).